Here is a 578-residue protein sequence, read N- to C-terminus: E3 ubiquitin-protein ligase hrd-like protein 1 (578 aa).

A helical membrane pass occupies residues 32–52 (GYLALSLCVAFIASASVFTHF). An N-linked (GlcNAc...) asparagine glycan is attached at Asn-68. A run of 7 helical transmembrane segments spans residues 76–96 (FGIN…HYIL), 101–121 (LIWV…KLII), 134–154 (VAAR…LSVV), 163–183 (VMPW…QFVT), 202–222 (SFIS…VSRF), 230–250 (PAVL…YILF), and 286–306 (FLSY…SIFF). The RING-type; atypical zinc finger occupies 350 to 388 (CIVCWELLGTSRRLPCSHQFHDWCLMWWLAQDSSCPTCR). The 43-residue stretch at 447-489 (QLQSMLETVLEMFPQMSPETILADLRQSGSAQSTIENILEGRM) folds into the CUE domain. Asn-492 is a glycosylation site (N-linked (GlcNAc...) asparagine).

Its subcellular location is the membrane. Functionally, proposed to have a role in neuroprotection. In Caenorhabditis briggsae, this protein is E3 ubiquitin-protein ligase hrd-like protein 1.